The sequence spans 480 residues: NADH-quinone oxidoreductase subunit N (480 aa).

The next 13 helical transmembrane spans lie at 11–31, 38–58, 74–94, 109–129, 163–183, 200–220, 239–259, 273–293, 301–321, 329–349, 372–392, 405–425, and 451–471; these read VIPE…DLFV, ITYG…IALA, GLSD…FLYS, YVLG…YSFL, FILG…LYGI, GAGL…GLAF, PTSV…AIIM, WQGM…VVAI, MLAY…LAGT, LFYT…IILL, FAFI…TVGF, VEMI…AFYY, and VVLS…GLLM.

It belongs to the complex I subunit 2 family. In terms of assembly, NDH-1 is composed of 14 different subunits. Subunits NuoA, H, J, K, L, M, N constitute the membrane sector of the complex.

The protein resides in the cell inner membrane. It catalyses the reaction a quinone + NADH + 5 H(+)(in) = a quinol + NAD(+) + 4 H(+)(out). In terms of biological role, NDH-1 shuttles electrons from NADH, via FMN and iron-sulfur (Fe-S) centers, to quinones in the respiratory chain. The immediate electron acceptor for the enzyme in this species is believed to be ubiquinone. Couples the redox reaction to proton translocation (for every two electrons transferred, four hydrogen ions are translocated across the cytoplasmic membrane), and thus conserves the redox energy in a proton gradient. This Thioalkalivibrio sulfidiphilus (strain HL-EbGR7) protein is NADH-quinone oxidoreductase subunit N.